The primary structure comprises 282 residues: Endo-1,4-beta-xylanase B (282 aa).

The N-terminal stretch at 1–39 is a signal peptide; the sequence is MGISSILLSALIAGGALALPAAEPVSFDIRDENITLARR. N33 carries N-linked (GlcNAc...) asparagine glycosylation. Residues 40–219 form the GH11 domain; sequence AEAINYNQDY…GSGSGQISLS (180 aa). E117 acts as the Nucleophile in catalysis. The active-site Proton donor is the E206. The interval 214–245 is disordered; the sequence is GQISLSKGTGGGSTTTTPTGPTSTSTAPSSGG. Positions 227–243 are enriched in low complexity; sequence TTTTPTGPTSTSTAPSS. The region spanning 246–282 is the CBM1 domain; the sequence is TGAAQWGQCGGIGWTGPTTCVAPYTCKYENAYYSQCQ.

It belongs to the glycosyl hydrolase 11 (cellulase G) family.

It localises to the secreted. The catalysed reaction is Endohydrolysis of (1-&gt;4)-beta-D-xylosidic linkages in xylans.. Its pathway is glycan degradation; xylan degradation. Significantly inhibited by the wheat xylanase inhibiting protein I (XIP-I) and the proteinaceous endoxylanase Triticum aestivum xylanase inhibitors I (TAXI-I), but not TAXI-II. Endo-1,4-beta-xylanase involved in the hydrolysis of xylan, a major structural heterogeneous polysaccharide found in plant biomass representing the second most abundant polysaccharide in the biosphere, after cellulose. This is Endo-1,4-beta-xylanase B (xynB) from Talaromyces funiculosus (Fruitlet core rot fungus).